The chain runs to 562 residues: Putative transport protein Spro_1639 (562 aa).

5 helical membrane passes run 8 to 28 (LLNGNYILLLFVVLALGLCLG), 37 to 57 (LGNSIGVLVVSLLLGQQHFAI), 66 to 86 (FMLFIFCVGVEAGPNFFSIFF), 94 to 114 (MLALVMVGSAMVIAIGLGKLF), and 158 to 178 (HLSLGYALTYLIGLVSLIFGA). RCK C-terminal domains lie at 202–288 (LDTD…SFRN) and 290–373 (KEVF…KIGF). The next 5 membrane-spanning stretches (helical) occupy residues 383–403 (LLAFCAFFIIGLLIGQITIQF), 406–426 (FSFGIGNAAGLLMAGIMLGFL), 447–467 (FGLMVFMAGVGLSAGAGIGNS), 475–495 (MLIAGLIVSLVPVVICFLFGA), and 541–561 (IANVLLTLAGSLIVVLWPGIL).

It belongs to the AAE transporter (TC 2.A.81) family. YbjL subfamily.

It is found in the cell membrane. The polypeptide is Putative transport protein Spro_1639 (Serratia proteamaculans (strain 568)).